The sequence spans 216 residues: UDP-N-acetylbacillosamine N-acetyltransferase (216 aa).

Catalysis depends on His-137, which acts as the Proton acceptor. His-146 provides a ligand contact to acetyl-CoA.

Belongs to the transferase hexapeptide repeat family. As to quaternary structure, forms oligomers.

It catalyses the reaction UDP-N-acetylbacillosamine + acetyl-CoA = UDP-N,N'-diacetylbacillosamine + CoA + H(+). In terms of biological role, catalyzes the conversion of UDP-2,4,6-trideoxy-2-acetamido-4-amino glucose to UDP-2,4,6-trideoxy-2,4-diacetamido glucose, commonly known as UDP-N,N'-diacetylbacillosamine (UDP-diNAcBac). This is UDP-N-acetylbacillosamine N-acetyltransferase from Bacillus subtilis (strain 168).